The chain runs to 446 residues: Regulator of drug sensitivity 2 (446 aa).

Positions Lys15–Cys45 form a DNA-binding region, zn(2)-C6 fungal-type. Disordered regions lie at residues Val52 to Asp106 and Ala158 to Ser218. Polar residues-rich tracts occupy residues Met56–Gln70 and Asp84–Thr96. Residue Ser102 is modified to Phosphoserine. Over residues Asn160–Gln177 the composition is skewed to polar residues. Residues Asn178–Asn192 show a composition bias toward basic and acidic residues. Residues Arg193 to Ser206 are compositionally biased toward polar residues. The segment covering Lys207–Ser218 has biased composition (basic and acidic residues). Residue Thr231 is modified to Phosphothreonine.

Post-translationally, phosphorylated by SNF1 in absence of glucose. The phosphorylation is required for induction of transcription of gluconeogenic genes.

Its subcellular location is the cytoplasm. The protein resides in the nucleus. In terms of biological role, transcription factor which regulates the expression of genes for gluconeogenesis, the TCA cycle, and glucose metabolism. Involved in the cell wall remodeling process and drug resistance. The chain is Regulator of drug sensitivity 2 (RDS2) from Saccharomyces cerevisiae (strain ATCC 204508 / S288c) (Baker's yeast).